Reading from the N-terminus, the 486-residue chain is Cardiolipin synthase A (486 aa).

2 consecutive transmembrane segments (helical) span residues 3–23 (TFYTVVSWLVILGYWVLIAGV) and 38–58 (MAWLLIIYILPLVGIIAYLSV). PLD phosphodiesterase domains are found at residues 219–246 (MDLRQHRKMVMIDNYIAYTGSMNMVDPR) and 399–426 (EGGLLHTKSVLVDGELSLVGTVNLDMRS). Active-site residues include His-224, Lys-226, Asp-231, His-404, Lys-406, and Asp-411.

The protein belongs to the phospholipase D family. Cardiolipin synthase subfamily. ClsA sub-subfamily.

It is found in the cell inner membrane. It carries out the reaction 2 a 1,2-diacyl-sn-glycero-3-phospho-(1'-sn-glycerol) = a cardiolipin + glycerol. Catalyzes the reversible phosphatidyl group transfer from one phosphatidylglycerol molecule to another to form cardiolipin (CL) (diphosphatidylglycerol) and glycerol. In Salmonella choleraesuis (strain SC-B67), this protein is Cardiolipin synthase A.